The primary structure comprises 87 residues: MGSITASFILITMQILFFCEDSSGEPNFAERNFWHASCSARGVYIDGSMITTLFFYASLLGVCVALISLAYHACFRLFTRSVLRSTW.

Positions 1 to 24 (MGSITASFILITMQILFFCEDSSG) are cleaved as a signal peptide. Residues 25 to 48 (EPNFAERNFWHASCSARGVYIDGS) lie on the Virion surface side of the membrane. Residues 49–69 (MITTLFFYASLLGVCVALISL) form a helical membrane-spanning segment. Residues 70-87 (AYHACFRLFTRSVLRSTW) are Intravirion-facing.

Belongs to the herpesviridae glycoprotein N family. As to quaternary structure, interacts (via N-terminus) with gM (via N-terminus). The gM-gN heterodimer forms the gCII complex.

It is found in the virion membrane. It localises to the host membrane. Its subcellular location is the host Golgi apparatus. The protein localises to the host trans-Golgi network. Functionally, envelope glycoprotein necessary for proper maturation of gM and modulation of its membrane fusion activity. Also plays a critical role in virion morphogenesis. The polypeptide is Envelope glycoprotein N (Varicella-zoster virus (strain Dumas) (HHV-3)).